Reading from the N-terminus, the 200-residue chain is MATIFDILKTLNNNNNNINNNKIESCKRQYTVNKRIDIIPSMDVTMTNDKLIIETELPGVSKNDIDINIKDSILIIQGEKKNNIIKLQQQQQQQSEKSSQSTNNKDDDEPSIEEYEDDTKLKSNLNKNTENKDENKTTSSITNKKFISERSFGNFKRYLNLSEILYQLDLNSINTQFENGLLTITINKKSDNFQIKLKSI.

The region spanning 33–200 (NKRIDIIPSM…DNFQIKLKSI (168 aa)) is the sHSP domain. A disordered region spans residues 86–139 (KLQQQQQQQSEKSSQSTNNKDDDEPSIEEYEDDTKLKSNLNKNTENKDENKTTS). Low complexity predominate over residues 88–101 (QQQQQQQSEKSSQS). Residues 106–117 (DDDEPSIEEYED) show a composition bias toward acidic residues.

It belongs to the small heat shock protein (HSP20) family.

The polypeptide is Small heat shock protein hspG2 (hspG2) (Dictyostelium discoideum (Social amoeba)).